A 396-amino-acid polypeptide reads, in one-letter code: Elongation factor Tu (396 aa).

A tr-type G domain is found at 10–206 (KPHVNVGTIG…VLDTYIPEPE (197 aa)). The interval 19–26 (GHVDHGKT) is G1. 19-26 (GHVDHGKT) is a GTP binding site. Thr-26 is a binding site for Mg(2+). The G2 stretch occupies residues 60 to 64 (GITIN). The G3 stretch occupies residues 81 to 84 (DCPG). Residues 81–85 (DCPGH) and 136–139 (NKCD) contribute to the GTP site. A G4 region spans residues 136–139 (NKCD). The interval 174–176 (SAT) is G5.

This sequence belongs to the TRAFAC class translation factor GTPase superfamily. Classic translation factor GTPase family. EF-Tu/EF-1A subfamily. In terms of assembly, monomer.

The protein resides in the cytoplasm. The catalysed reaction is GTP + H2O = GDP + phosphate + H(+). In terms of biological role, GTP hydrolase that promotes the GTP-dependent binding of aminoacyl-tRNA to the A-site of ribosomes during protein biosynthesis. This chain is Elongation factor Tu, found in Psychrobacter cryohalolentis (strain ATCC BAA-1226 / DSM 17306 / VKM B-2378 / K5).